A 353-amino-acid chain; its full sequence is MNTIVFNKLGGAVLFEDRGTPDRERGSRTFSGFLDNPHTGPEVGIPDGPPLKDNLSLRHRRTGARQNGGKVRHKRQALQDMARPLKQWLYKHRDNPYPTKTEKILLALGSQMTLVQVSNWFANARRRLKNTVRQPDLSWALRIKLYNKYVQGNAERLSVSSDGDSCSEDGENPPRNHMNEEGYSTPAHHTVIKGESSAIKAGGRPESRAAEDYVSPPKYKSSLLNRYLNDSLRHVMATSTAMMGKTRRRNHSGSFSSNEFEEELVSPSSSETEGTFVYRTDTPDIGSTKGDSAANRRGPSKDDTYWKEINAAMALTNLAQGKDEVQGTTSCIIQKSSHIAEVKTVKLPLVQRF.

Over residues 18–27 the composition is skewed to basic and acidic residues; sequence RGTPDRERGS. Positions 18–50 are disordered; it reads RGTPDRERGSRTFSGFLDNPHTGPEVGIPDGPP. A DNA-binding region (homeobox; TALE-type) is located at residues 71 to 132; sequence VRHKRQALQD…NARRRLKNTV (62 aa). 2 disordered regions span residues 157-183 and 243-302; these read LSVS…EEGY and MGKT…PSKD.

It belongs to the TALE/IRO homeobox family.

It localises to the nucleus. Functionally, may act as a morphogenetic regulator of cell adhesion. Participates in the early events that lead to differentiation. The chain is Homeobox protein Mohawk (Mkx) from Mus musculus (Mouse).